The chain runs to 47 residues: uncharacterized protein (47 aa).

A signal peptide spans 1–18 (MKKWLLIIAGALIISACA). The tract at residues 28 to 47 (EGSHSGVKFDKDSRQWGLNQ) is disordered.

This is an uncharacterized protein from Haemophilus influenzae (strain ATCC 51907 / DSM 11121 / KW20 / Rd).